Consider the following 121-residue polypeptide: Large ribosomal subunit protein uL14 (121 aa).

This sequence belongs to the universal ribosomal protein uL14 family. Part of the 50S ribosomal subunit. Forms a cluster with proteins L3 and L19. In the 70S ribosome, L14 and L19 interact and together make contacts with the 16S rRNA in bridges B5 and B8.

In terms of biological role, binds to 23S rRNA. Forms part of two intersubunit bridges in the 70S ribosome. The sequence is that of Large ribosomal subunit protein uL14 from Synechococcus sp. (strain CC9311).